The primary structure comprises 179 residues: B-cell acute lymphoblastic leukemia-expressed protein (179 aa).

Disordered stretches follow at residues 1–20 (MMKDIIPASSWASEESTDLQ) and 65–86 (RDTPPPVTSPRGDGICVSRGKA). Residues 10-20 (SWASEESTDLQ) show a composition bias toward polar residues.

The chain is B-cell acute lymphoblastic leukemia-expressed protein (BLACE) from Homo sapiens (Human).